A 236-amino-acid polypeptide reads, in one-letter code: Ubiquinone biosynthesis O-methyltransferase (236 aa).

Residues Arg39, Gly59, Asp80, and Met124 each coordinate S-adenosyl-L-methionine.

It belongs to the methyltransferase superfamily. UbiG/COQ3 family.

It catalyses the reaction a 3-demethylubiquinol + S-adenosyl-L-methionine = a ubiquinol + S-adenosyl-L-homocysteine + H(+). It carries out the reaction a 3-(all-trans-polyprenyl)benzene-1,2-diol + S-adenosyl-L-methionine = a 2-methoxy-6-(all-trans-polyprenyl)phenol + S-adenosyl-L-homocysteine + H(+). The protein operates within cofactor biosynthesis; ubiquinone biosynthesis. In terms of biological role, O-methyltransferase that catalyzes the 2 O-methylation steps in the ubiquinone biosynthetic pathway. This chain is Ubiquinone biosynthesis O-methyltransferase, found in Shewanella sp. (strain ANA-3).